Consider the following 241-residue polypeptide: Triosephosphate isomerase (241 aa).

Residue 9–11 (NWK) coordinates substrate. Histidine 96 functions as the Electrophile in the catalytic mechanism. The Proton acceptor role is filled by glutamate 165. Substrate-binding positions include glycine 171, serine 204, and 225-226 (GG).

This sequence belongs to the triosephosphate isomerase family. As to quaternary structure, homodimer.

Its subcellular location is the cytoplasm. It catalyses the reaction D-glyceraldehyde 3-phosphate = dihydroxyacetone phosphate. The protein operates within carbohydrate biosynthesis; gluconeogenesis. It participates in carbohydrate degradation; glycolysis; D-glyceraldehyde 3-phosphate from glycerone phosphate: step 1/1. Functionally, involved in the gluconeogenesis. Catalyzes stereospecifically the conversion of dihydroxyacetone phosphate (DHAP) to D-glyceraldehyde-3-phosphate (G3P). The polypeptide is Triosephosphate isomerase (Prochlorococcus marinus (strain MIT 9301)).